The following is a 1282-amino-acid chain: Trafficking protein particle complex subunit 8 (1282 aa).

A disordered region spans residues 245–287 (TDAIAPGPNGASNQQSPSSPTSSVATISSTMPAVGSVSPNSHP). Over residues 255 to 273 (ASNQQSPSSPTSSVATISS) the composition is skewed to low complexity.

In terms of biological role, plays a role in endoplasmic reticulum to Golgi apparatus trafficking at a very early stage. Involved in collagen secretion. In Caenorhabditis elegans, this protein is Trafficking protein particle complex subunit 8.